Reading from the N-terminus, the 512-residue chain is Serine/threonine-protein kinase grp (512 aa).

The Protein kinase domain occupies 22–279 (WTLAQTLGEG…LEKTLDHKWC (258 aa)). Residues 28-36 (LGEGAYGEV) and Lys51 each bind ATP. Asp143 (proton acceptor) is an active-site residue. The segment at 335-360 (PTMRSDDDFNVRLGSGRSKEDGGDRQ) is disordered.

This sequence belongs to the protein kinase superfamily. CAMK Ser/Thr protein kinase family. NIM1 subfamily. In terms of processing, phosphorylated in a MEI-41/ATR dependent manner in response to DNA damage or the presence of unreplicated DNA.

The protein resides in the nucleus. The enzyme catalyses L-seryl-[protein] + ATP = O-phospho-L-seryl-[protein] + ADP + H(+). The catalysed reaction is L-threonyl-[protein] + ATP = O-phospho-L-threonyl-[protein] + ADP + H(+). Its function is as follows. Serine/threonine-protein kinase which is required for checkpoint-mediated cell cycle arrest and activation of DNA repair in response to the presence of DNA damage or unreplicated DNA. May also negatively regulate cell cycle progression during unperturbed cell cycles. May phosphorylate the CDC25 phosphatase stg, which promotes its degradation. This results in increased inhibitory tyrosine phosphorylation of Cdk1-cyclin complexes and consequent inhibition of cell cycle progression. The protein is Serine/threonine-protein kinase grp of Drosophila melanogaster (Fruit fly).